The chain runs to 402 residues: 1-deoxy-D-xylulose 5-phosphate reductoisomerase (402 aa).

The NADPH site is built by Thr25, Gly26, Ser27, Val28, Arg52, Asn53, and Asn136. Lys137 contacts 1-deoxy-D-xylulose 5-phosphate. Glu138 is an NADPH binding site. Position 162 (Asp162) interacts with Mn(2+). 1-deoxy-D-xylulose 5-phosphate contacts are provided by Ser163, Glu164, Ser188, and His211. Glu164 contacts Mn(2+). Gly217 contacts NADPH. The 1-deoxy-D-xylulose 5-phosphate site is built by Ser224, Asn229, Lys230, and Glu233. Glu233 contributes to the Mn(2+) binding site.

It belongs to the DXR family. It depends on Mg(2+) as a cofactor. The cofactor is Mn(2+).

The catalysed reaction is 2-C-methyl-D-erythritol 4-phosphate + NADP(+) = 1-deoxy-D-xylulose 5-phosphate + NADPH + H(+). Its pathway is isoprenoid biosynthesis; isopentenyl diphosphate biosynthesis via DXP pathway; isopentenyl diphosphate from 1-deoxy-D-xylulose 5-phosphate: step 1/6. Its function is as follows. Catalyzes the NADPH-dependent rearrangement and reduction of 1-deoxy-D-xylulose-5-phosphate (DXP) to 2-C-methyl-D-erythritol 4-phosphate (MEP). This is 1-deoxy-D-xylulose 5-phosphate reductoisomerase from Rhodospirillum centenum (strain ATCC 51521 / SW).